The following is a 252-amino-acid chain: Ribosomal RNA small subunit methyltransferase J (252 aa).

Residues 104 to 105 (RD), 120 to 121 (ER), 156 to 157 (SS), and Asp174 contribute to the S-adenosyl-L-methionine site.

Belongs to the methyltransferase superfamily. RsmJ family.

Its subcellular location is the cytoplasm. It catalyses the reaction guanosine(1516) in 16S rRNA + S-adenosyl-L-methionine = N(2)-methylguanosine(1516) in 16S rRNA + S-adenosyl-L-homocysteine + H(+). Functionally, specifically methylates the guanosine in position 1516 of 16S rRNA. The protein is Ribosomal RNA small subunit methyltransferase J of Yersinia enterocolitica serotype O:8 / biotype 1B (strain NCTC 13174 / 8081).